Consider the following 87-residue polypeptide: Putative membrane protein insertion efficiency factor (87 aa).

This sequence belongs to the UPF0161 family.

Its subcellular location is the cell membrane. In terms of biological role, could be involved in insertion of integral membrane proteins into the membrane. This is Putative membrane protein insertion efficiency factor from Ligilactobacillus salivarius (strain UCC118) (Lactobacillus salivarius).